We begin with the raw amino-acid sequence, 335 residues long: Biotin synthase (335 aa).

In terms of domain architecture, Radical SAM core spans 43-269 (YFGKKVKLNM…INPTKEIRIA (227 aa)). 3 residues coordinate [4Fe-4S] cluster: C61, C65, and C68. C104, C137, C197, and R267 together coordinate [2Fe-2S] cluster.

Belongs to the radical SAM superfamily. Biotin synthase family. Homodimer. [4Fe-4S] cluster serves as cofactor. The cofactor is [2Fe-2S] cluster.

It catalyses the reaction (4R,5S)-dethiobiotin + (sulfur carrier)-SH + 2 reduced [2Fe-2S]-[ferredoxin] + 2 S-adenosyl-L-methionine = (sulfur carrier)-H + biotin + 2 5'-deoxyadenosine + 2 L-methionine + 2 oxidized [2Fe-2S]-[ferredoxin]. It functions in the pathway cofactor biosynthesis; biotin biosynthesis; biotin from 7,8-diaminononanoate: step 2/2. Catalyzes the conversion of dethiobiotin (DTB) to biotin by the insertion of a sulfur atom into dethiobiotin via a radical-based mechanism. This chain is Biotin synthase, found in Staphylococcus aureus (strain MSSA476).